A 352-amino-acid chain; its full sequence is V-type ATP synthase subunit C (352 aa).

It belongs to the V-ATPase V0D/AC39 subunit family.

Functionally, produces ATP from ADP in the presence of a proton gradient across the membrane. This chain is V-type ATP synthase subunit C (atpC), found in Deinococcus radiodurans (strain ATCC 13939 / DSM 20539 / JCM 16871 / CCUG 27074 / LMG 4051 / NBRC 15346 / NCIMB 9279 / VKM B-1422 / R1).